A 617-amino-acid chain; its full sequence is Dopamine beta-hydroxylase (617 aa).

Residues 1-16 (MPALSRWASLPGPSMR) lie on the Cytoplasmic side of the membrane. Residues 17–37 (EAAFMYSTAVAIFLVILVAAL) form a helical; Signal-anchor for type II membrane protein membrane-spanning segment. Residues 38-617 (QGSAPRESPL…TVVSIGGGKG (580 aa)) lie on the Intragranular side of the membrane. The DOMON domain maps to 57–173 (GSLELSWNVS…GTVHLVYGIL (117 aa)). Asn64 carries an N-linked (GlcNAc...) asparagine glycan. 6 disulfides stabilise this stretch: Cys154–Cys596, Cys232–Cys283, Cys269–Cys295, Cys390–Cys503, Cys394–Cys565, and Cys466–Cys488. A glycan (N-linked (GlcNAc...) (complex) asparagine) is linked at Asn184. The active site involves Tyr230. Residues His262 and His263 each contribute to the Cu(2+) site. His333 contributes to the Cu(2+) binding site. The N-linked (GlcNAc...) asparagine glycan is linked to Asn344. Residue His412 is part of the active site. Cu(2+) is bound by residues His412, His414, and Met487. Asn566 is a glycosylation site (N-linked (GlcNAc...) asparagine). Positions 590-617 (EEPTPQCPTSQGRSPAGPTVVSIGGGKG) are disordered.

It belongs to the copper type II ascorbate-dependent monooxygenase family. As to quaternary structure, homotetramer; composed of two disulfide-linked dimers. Cu(2+) is required as a cofactor. N-glycosylated. In terms of processing, proteolytic cleavage after the membrane-anchor leads to the release of the soluble form.

It localises to the cytoplasmic vesicle. The protein localises to the secretory vesicle lumen. It is found in the secretory vesicle. Its subcellular location is the chromaffin granule lumen. The protein resides in the secreted. It localises to the secretory vesicle membrane. The protein localises to the chromaffin granule membrane. The enzyme catalyses dopamine + 2 L-ascorbate + O2 = (R)-noradrenaline + 2 monodehydro-L-ascorbate radical + H2O. The protein operates within catecholamine biosynthesis; (R)-noradrenaline biosynthesis; (R)-noradrenaline from dopamine: step 1/1. Its function is as follows. Catalyzes the hydroxylation of dopamine to noradrenaline (also known as norepinephrine), and is thus vital for regulation of these neurotransmitters. This Homo sapiens (Human) protein is Dopamine beta-hydroxylase (DBH).